Reading from the N-terminus, the 411-residue chain is LIM domain-binding protein 1 (411 aa).

Ser2 is modified (N-acetylserine). Thr61 is modified (phosphothreonine). Ser265 and Ser302 each carry phosphoserine. Disordered regions lie at residues Pro284 to Leu330 and Asp367 to Gln411. A compositionally biased stretch (low complexity) spans Ser302 to Asn318. One can recognise an LIM interaction domain (LID) domain in the interval Asp336–Glu375.

The protein belongs to the LDB family. As to quaternary structure, interacts with ESR1. Forms homodimers and heterodimers. Interacts with and activates LHX1/LIM1. Interacts with the LIM domains of ISL1 and LMO2. Can assemble in a complex with LMO2 and TAL1/SCL but does not interact with TAL1/SCL directly. Strongly interacts with the LIM2 domain of LMX1A and more weakly with the LIM1 domain. Homodimerization is not required for, and does not effect, LMX1A-binding. Component of a nuclear TAL-1 complex composed at least of CBFA2T3, LDB1, TAL1 and TCF3. Interacts with LHX6 and LHX9. At neuronal promoters, forms a complex with LHX3 involved in the specification of interneurons, in motor neurons, it is displaced by ISL1 to form a ternary complex in which ISL1 contacts both LHX3 and LDB1. Interacts with SLK; leading to negatively regulate SLK kinase activity. Interacts with YWHAZ. Interacts with PRDM1/BLIMP1. Interacts with LMO4. Interacts with RLIM/RNF12; the interaction inhibits the ubiquitination of LMO proteins. In terms of processing, ubiquitinated by RLIM/RNF12, leading to its degradation by the proteasome. In terms of tissue distribution, expressed in multiple adult tissues including heart, brain, liver, kidney, testis, lung and muscle, with expression highest in the pituitary gland and skin.

The protein localises to the nucleus. In terms of biological role, binds to the LIM domain of a wide variety of LIM domain-containing transcription factors. May regulate the transcriptional activity of LIM-containing proteins by determining specific partner interactions. Plays a role in the development of interneurons and motor neurons in cooperation with LHX3 and ISL1. Acts synergistically with LHX1/LIM1 in axis formation and activation of gene expression. Acts with LMO2 in the regulation of red blood cell development, maintaining erythroid precursors in an immature state. This is LIM domain-binding protein 1 (Ldb1) from Mus musculus (Mouse).